We begin with the raw amino-acid sequence, 267 residues long: Indole-3-glycerol phosphate synthase (267 aa).

The protein belongs to the TrpC family.

The enzyme catalyses 1-(2-carboxyphenylamino)-1-deoxy-D-ribulose 5-phosphate + H(+) = (1S,2R)-1-C-(indol-3-yl)glycerol 3-phosphate + CO2 + H2O. The protein operates within amino-acid biosynthesis; L-tryptophan biosynthesis; L-tryptophan from chorismate: step 4/5. The sequence is that of Indole-3-glycerol phosphate synthase from Ralstonia pickettii (strain 12J).